A 93-amino-acid polypeptide reads, in one-letter code: Large ribosomal subunit protein bL27 (93 aa).

Positions 1–9 (MLQLNLQFF) are excised as a propeptide. Positions 14–33 (GVGSTKNGRDSISKRLGAKR) are disordered.

Belongs to the bacterial ribosomal protein bL27 family. Post-translationally, the N-terminus is cleaved by ribosomal processing cysteine protease Prp.

This is Large ribosomal subunit protein bL27 from Exiguobacterium sp. (strain ATCC BAA-1283 / AT1b).